The primary structure comprises 156 residues: Small ribosomal subunit protein uS7 (156 aa).

This sequence belongs to the universal ribosomal protein uS7 family. As to quaternary structure, part of the 30S ribosomal subunit. Contacts proteins S9 and S11.

Its function is as follows. One of the primary rRNA binding proteins, it binds directly to 16S rRNA where it nucleates assembly of the head domain of the 30S subunit. Is located at the subunit interface close to the decoding center, probably blocks exit of the E-site tRNA. The sequence is that of Small ribosomal subunit protein uS7 from Parasynechococcus marenigrum (strain WH8102).